Reading from the N-terminus, the 208-residue chain is Protein-L-isoaspartate O-methyltransferase (208 aa).

Residue serine 59 is part of the active site.

Belongs to the methyltransferase superfamily. L-isoaspartyl/D-aspartyl protein methyltransferase family.

It localises to the cytoplasm. The catalysed reaction is [protein]-L-isoaspartate + S-adenosyl-L-methionine = [protein]-L-isoaspartate alpha-methyl ester + S-adenosyl-L-homocysteine. Functionally, catalyzes the methyl esterification of L-isoaspartyl residues in peptides and proteins that result from spontaneous decomposition of normal L-aspartyl and L-asparaginyl residues. It plays a role in the repair and/or degradation of damaged proteins. In Escherichia coli O7:K1 (strain IAI39 / ExPEC), this protein is Protein-L-isoaspartate O-methyltransferase.